The following is a 272-amino-acid chain: D-aminoacyl-tRNA deacylase (272 aa).

This sequence belongs to the DtdA deacylase family. As to quaternary structure, monomer. Requires Zn(2+) as cofactor.

The enzyme catalyses a D-aminoacyl-tRNA + H2O = a tRNA + a D-alpha-amino acid + H(+). It catalyses the reaction glycyl-tRNA(Ala) + H2O = tRNA(Ala) + glycine + H(+). In terms of biological role, D-aminoacyl-tRNA deacylase with broad substrate specificity. By recycling D-aminoacyl-tRNA to D-amino acids and free tRNA molecules, this enzyme counteracts the toxicity associated with the formation of D-aminoacyl-tRNA entities in vivo. The protein is D-aminoacyl-tRNA deacylase of Desulfurococcus amylolyticus (strain DSM 18924 / JCM 16383 / VKM B-2413 / 1221n) (Desulfurococcus kamchatkensis).